The following is a 343-amino-acid chain: GTP 3',8-cyclase (343 aa).

In terms of domain architecture, Radical SAM core spans 19-244; sequence PYGRTISYLR…TDVDDSTGGP (226 aa). GTP is bound at residue Arg28. 2 residues coordinate [4Fe-4S] cluster: Cys35 and Cys39. S-adenosyl-L-methionine is bound at residue Tyr41. Cys42 lines the [4Fe-4S] cluster pocket. Arg77 is a GTP binding site. Gly81 is a binding site for S-adenosyl-L-methionine. Thr111 serves as a coordination point for GTP. Residue Ser135 participates in S-adenosyl-L-methionine binding. A GTP-binding site is contributed by Lys171. Met205 contacts S-adenosyl-L-methionine. Residues Cys268 and Cys271 each contribute to the [4Fe-4S] cluster site. 273 to 275 contacts GTP; that stretch reads RVR. Cys285 serves as a coordination point for [4Fe-4S] cluster.

Belongs to the radical SAM superfamily. MoaA family. In terms of assembly, monomer and homodimer. [4Fe-4S] cluster serves as cofactor.

It carries out the reaction GTP + AH2 + S-adenosyl-L-methionine = (8S)-3',8-cyclo-7,8-dihydroguanosine 5'-triphosphate + 5'-deoxyadenosine + L-methionine + A + H(+). The protein operates within cofactor biosynthesis; molybdopterin biosynthesis. Functionally, catalyzes the cyclization of GTP to (8S)-3',8-cyclo-7,8-dihydroguanosine 5'-triphosphate. The chain is GTP 3',8-cyclase from Nitrobacter hamburgensis (strain DSM 10229 / NCIMB 13809 / X14).